Consider the following 613-residue polypeptide: Leucine-rich repeat and immunoglobulin-like domain-containing nogo receptor-interacting protein 1 (613 aa).

Positions 1 to 34 (MLAGEASMRSPILACWQPILLLMLGSILSGSATG) are cleaved as a signal peptide. 2 disulfides stabilise this stretch: Cys-35-Cys-41 and Cys-39-Cys-50. One can recognise an LRRNT domain in the interval 35 to 64 (CPPRCECSAQERAVLCHRKRFMVVPEGIPT). Residues 35–554 (CPPRCECSAQ…FDIKTLIIAT (520 aa)) lie on the Extracellular side of the membrane. LRR repeat units follow at residues 65–86 (ETRQ…EFAN), 89–110 (HLEE…AFNN), 113–134 (NLRT…VFTG), 137–158 (NLTK…MFQD), 161–182 (NLKS…AFSG), 185–206 (SLEQ…ALSH), 209–230 (GLIV…SFKR), 257–278 (NLTS…SVRH), 281–302 (YLRF…MLHD), 305–326 (RLQE…AFRG), and 329–350 (YLRI…AFHS). N-linked (GlcNAc...) asparagine glycosylation is present at Asn-137. A glycan (N-linked (GlcNAc...) asparagine) is linked at Asn-195. Residues Asn-257, Asn-267, and Asn-286 are each glycosylated (N-linked (GlcNAc...) asparagine). The N-linked (GlcNAc...) asparagine glycan is linked to Asn-334. An LRRCT domain is found at 362–416 (NPLACDCRLLWVFRRRWRLNFNKQQPTCSTPEFVQGKEFKDFPDVLLPNYFTCRR). Cystine bridges form between Cys-366/Cys-389, Cys-368/Cys-414, and Cys-439/Cys-490. Residues 404–508 (PDVLLPNYFT…DTMLAHLHVR (105 aa)) form the Ig-like C2-type domain. Asn-485, Asn-498, Asn-519, Asn-530, and Asn-535 each carry an N-linked (GlcNAc...) asparagine glycan. A helical membrane pass occupies residues 555 to 575 (TMGFISFLGVVLFCLVLLFLW). The Cytoplasmic portion of the chain corresponds to 576 to 613 (SRGKGNTKHNIEIEYVPRKSDAGISSADAPRKFNMKMI).

As to quaternary structure, homotetramer. Forms ternary complex with RTN4R/NGFR and RTN4R/TNFRSF19. In terms of processing, N-glycosylated. Contains predominantly high-mannose glycans.

The protein localises to the cell membrane. Functional component of the Nogo receptor signaling complex (RTN4R/NGFR) in RhoA activation responsible for some inhibition of axonal regeneration by myelin-associated factors. Is also an important negative regulator of oligodentrocyte differentiation and axonal myelination. This Gallus gallus (Chicken) protein is Leucine-rich repeat and immunoglobulin-like domain-containing nogo receptor-interacting protein 1 (LINGO1).